Reading from the N-terminus, the 509-residue chain is Photosystem II CP47 reaction center protein (509 aa).

Transmembrane regions (helical) follow at residues Ala-21–Ser-36, Ile-101–Trp-115, Gly-140–Phe-156, Ile-203–Thr-218, Val-237–Thr-252, and Asn-457–Arg-472.

This sequence belongs to the PsbB/PsbC family. PsbB subfamily. PSII is composed of 1 copy each of membrane proteins PsbA, PsbB, PsbC, PsbD, PsbE, PsbF, PsbH, PsbI, PsbJ, PsbK, PsbL, PsbM, PsbT, PsbX, PsbY, PsbZ, Psb30/Ycf12, at least 3 peripheral proteins of the oxygen-evolving complex and a large number of cofactors. It forms dimeric complexes. Binds multiple chlorophylls. PSII binds additional chlorophylls, carotenoids and specific lipids. serves as cofactor.

The protein resides in the plastid. It localises to the chloroplast thylakoid membrane. One of the components of the core complex of photosystem II (PSII). It binds chlorophyll and helps catalyze the primary light-induced photochemical processes of PSII. PSII is a light-driven water:plastoquinone oxidoreductase, using light energy to abstract electrons from H(2)O, generating O(2) and a proton gradient subsequently used for ATP formation. The polypeptide is Photosystem II CP47 reaction center protein (Porphyra purpurea (Red seaweed)).